The chain runs to 341 residues: MKALSKLKAEEGIWMTDVPEPEVGHNDLLIKIRKTAICGTDVHIYNWDEWSQKTIPVPMVVGHEYVGEVVGIGQEVKGFKIGDRVSGEGHITCGHCRNCRGGRTHLCRNTTGVGVNRPGCFAEYLVIPAFNAFKIPDNISDDLASIFDPFGNAVHTALSFDLVGEDVLVSGAGPIGVMAAAVAKHVGARHVVITDVNEYRLELARKMGVTRAVNVAKESLNDVMAELGMTEGFDVGLEMSGAPPAFRTMLDTMNHGGRIAMLGIPPSDMSIDWTKVIFKGLFIKGIYGREMFETWYKMAALIQSGLDLSPIITHRFSVDDFQKGFDAMCSGQSGKVILSWD.

Position 38 (cysteine 38) interacts with Zn(2+). Residues threonine 40 and histidine 43 each act as charge relay system in the active site. Positions 63, 64, 93, 96, 99, and 107 each coordinate Zn(2+). NAD(+) contacts are provided by residues isoleucine 175, aspartate 195, arginine 200, leucine 262–isoleucine 264, and isoleucine 286–tyrosine 287.

This sequence belongs to the zinc-containing alcohol dehydrogenase family. Homotetramer. Zn(2+) is required as a cofactor.

The protein resides in the cytoplasm. It catalyses the reaction L-threonine + NAD(+) = (2S)-2-amino-3-oxobutanoate + NADH + H(+). It participates in amino-acid degradation; L-threonine degradation via oxydo-reductase pathway; glycine from L-threonine: step 1/2. Catalyzes the NAD(+)-dependent oxidation of L-threonine to 2-amino-3-ketobutyrate. The protein is L-threonine 3-dehydrogenase of Salmonella typhi.